Here is a 479-residue protein sequence, read N- to C-terminus: UDP-glycosyltransferase 84A3 (479 aa).

His-19 (proton acceptor) is an active-site residue. His-19 serves as a coordination point for an anthocyanidin. The UDP-alpha-D-glucose site is built by Gln-346, His-361, Trp-364, Asn-365, Ser-366, and Glu-369. Gly-384 is an an anthocyanidin binding site. UDP-alpha-D-glucose-binding residues include Asp-385 and Gln-386.

The protein belongs to the UDP-glycosyltransferase family.

The catalysed reaction is (E)-4-coumarate + UDP-alpha-D-glucose = 4-O-(beta-D-glucosyl)-trans-4-coumarate + UDP + H(+). It carries out the reaction (E)-ferulate + UDP-alpha-D-glucose = 1-O-[(E)-feruloyl]-beta-D-glucose + UDP. The enzyme catalyses (E)-caffeate + UDP-alpha-D-glucose = 1-O-[(E)-caffeoyl]-beta-D-glucose + UDP. It catalyses the reaction (E)-sinapate + UDP-alpha-D-glucose = 1-O-(trans-sinapoyl)-beta-D-glucose + UDP. The catalysed reaction is (E)-cinnamate + UDP-alpha-D-glucose = 1-O-(trans-cinnamoyl)-beta-D-glucose + UDP. In terms of biological role, UDP-glucosyltransferase that forms glucose esters with phenylpropanoids. Glucosylates 4-coumarate, ferulate, caffeate, sinapate and cinnamate. The protein is UDP-glycosyltransferase 84A3 of Arabidopsis thaliana (Mouse-ear cress).